We begin with the raw amino-acid sequence, 681 residues long: DNA ligase (681 aa).

Residues 35–39 (DAEYD), 84–85 (SL), and Glu115 each bind NAD(+). The active-site N6-AMP-lysine intermediate is Lys117. NAD(+)-binding residues include Arg138, Glu175, Lys293, and Lys317. Zn(2+) contacts are provided by Cys411, Cys414, Cys429, and Cys435. Residues 598 to 681 (RTNLAVPGKT…SLLRDTSSSE (84 aa)) form the BRCT domain.

This sequence belongs to the NAD-dependent DNA ligase family. LigA subfamily. Mg(2+) serves as cofactor. The cofactor is Mn(2+).

It catalyses the reaction NAD(+) + (deoxyribonucleotide)n-3'-hydroxyl + 5'-phospho-(deoxyribonucleotide)m = (deoxyribonucleotide)n+m + AMP + beta-nicotinamide D-nucleotide.. Functionally, DNA ligase that catalyzes the formation of phosphodiester linkages between 5'-phosphoryl and 3'-hydroxyl groups in double-stranded DNA using NAD as a coenzyme and as the energy source for the reaction. It is essential for DNA replication and repair of damaged DNA. The chain is DNA ligase from Nitrosomonas europaea (strain ATCC 19718 / CIP 103999 / KCTC 2705 / NBRC 14298).